A 558-amino-acid polypeptide reads, in one-letter code: TNF receptor-associated factor 5 (558 aa).

The RING-type zinc finger occupies 45–85 (CAFCHSVLHNPHQTGCGHRFCQQCIRSLRELNSVPICPVDK). TRAF-type zinc fingers lie at residues 127-181 (DHLQ…TNLQ) and 182-239 (DHEE…GNLL). A coiled-coil region spans residues 252-302 (LVLEKNYQLEQRISDLYQSLEQKESKIQQLAETVKKFEKELKQFTQMFGRN). Residue Lys-318 forms a Glycyl lysine isopeptide (Lys-Gly) (interchain with G-Cter in ubiquitin) linkage. Positions 340–400 (LDLRSLVDAV…EERFKQLEGA (61 aa)) form a coiled coil. The interval 345-558 (LVDAVDSVKQ…AVDLTDLEDL (214 aa)) is interaction with EIF2AK2/PKR. An MATH domain is found at 403 to 550 (SGKLIWKVTD…DDTLFLKVAV (148 aa)).

This sequence belongs to the TNF receptor-associated factor family. A subfamily. Homotrimer. Heterotrimer with TRAF3. Associates with TNFRSF5/CD40 through interaction with TRAF3. Associates with LTBR/TNFRSF3, TNFRSF4, TNFRSF8/CD30, TNFRSF11A/RANK, TNFRSF13B/TACI, TNFRSF14, TNFRSF17, TNFRSF19/TROY, RIPK2, MAP3K14, MAP3K5, and TRAF and TNF receptor associated protein TDP2. Interacts (via C-terminus) with EIF2AK2/PKR (via the kinase catalytic domain). Post-translationally, ubiquitinated at Lys-318 by the SCF(FBXL2) complex, leading to its degradation by the proteasome.

Its subcellular location is the cytoplasm. The protein resides in the cytosol. Functionally, adapter protein and signal transducer that links members of the tumor necrosis factor receptor family to different signaling pathways by association with the receptor cytoplasmic domain and kinases. Mediates activation of NF-kappa-B and probably JNK. Seems to be involved in apoptosis. Plays a role in mediating activation of NF-kappa-B by EIF2AK2/PKR. In Mus musculus (Mouse), this protein is TNF receptor-associated factor 5 (Traf5).